The chain runs to 840 residues: MSVVGIDLGFQSCYVAVARAGGIETIANEYSDRCTPACISFGPKNRSIGAAAKSQVISNAKNTVQGFKRFHGRAFSDPFVEAEKSNLAYDIVQLPTGLTGIKVKYMEEERNFTTEQVTAMLLSKLKETAESVLKKPVVDCVVSVPCFYTDAERRSVMDATQIAGLNCLRLMNETTAVALAYGIYKQDLPALEEKPRNVVFVDMGHSSYQVSVCAFNRGKLKVLATAFDTTLGGRKFDEVLVNHFCEEFGKKYKLDIKSKIRALLRLSQECEKLKKLMSANASDLPLSIECFMNDVDVSGTMNRGKFLEMCDDLLARVEPPLRSVLEQAKLRKEDIYAVEIVGGATRIPAVKEKISKFFGKELSTTLNADEAVTRGCALQCAILSPAFKVREFSITDVVPYSISLRWNSPAEEGSSDCEVFTKNHSAPFSKVLTFYRKEPFTLEAYYSSPQDLPYPDPAIAQFLVQKVTPQSDGSSSKVKVKVRVNVHGIFSVSSASLVEVLKFEENEEPMETDQNAKEEEKMQVDQEEPHAEEQQQQTPAENKAESEEMETSQAASKDKKMDQPPQAKKAKVKTSTVDLPIENQLLWQIDREMLNLYIENEGKMIMQDKLKKERNDAKNAVEEYVYEMRDKLSGEYEKFVSEDDRNSFTLKLEDTENWLYEDGEDQPKQVYVDKLAELKNLGQPIKMRFQESEERPKLFEELGKQIQQYMKVISSFKNKEDQYDHLDAADMLKVEKSTNEAMEWMNNKLNLQNKQSLTVDPVVKAKEIEAKIKELMSVCGPIISKPKPKVEPPKEEQKNAEQNGPVDGQGDSPGPQAAEQGTDTAVPSDSDKKLPEMDID.

Lys53 is subject to N6-acetyllysine. The residue at position 76 (Ser76) is a Phosphoserine. Phosphotyrosine is present on residues Tyr89 and Tyr336. Residues Ser393 and Ser415 each carry the phosphoserine modification. N6-acetyllysine is present on Lys430. The segment at 506–575 (NEEPMETDQN…QAKKAKVKTS (70 aa)) is disordered. The span at 514-533 (QNAKEEEKMQVDQEEPHAEE) shows a compositional bias: basic and acidic residues. Thr538 is modified (phosphothreonine). A phosphoserine mark is found at Ser546 and Ser647. Tyr660 is subject to Phosphotyrosine. Lys679 bears the N6-acetyllysine mark. Position 756 is a phosphoserine (Ser756). Lys773 is modified (N6-methyllysine). The segment at 782–840 (IISKPKPKVEPPKEEQKNAEQNGPVDGQGDSPGPQAAEQGTDTAVPSDSDKKLPEMDID) is disordered. Basic and acidic residues-rich tracts occupy residues 788-799 (PKVEPPKEEQKN) and 829-840 (DSDKKLPEMDID).

Belongs to the heat shock protein 70 family. As to quaternary structure, interacts with TJP1/ZO-1.

Its subcellular location is the cytoplasm. The sequence is that of Heat shock 70 kDa protein 4 (HSPA4) from Canis lupus familiaris (Dog).